The chain runs to 602 residues: Elongation factor 4 (602 aa).

A tr-type G domain is found at 7-188 (ENIRNFSIIA…SIIRLVPPPK (182 aa)). Residues 19–24 (DHGKST) and 135–138 (NKID) each bind GTP.

It belongs to the TRAFAC class translation factor GTPase superfamily. Classic translation factor GTPase family. LepA subfamily.

The protein localises to the cell inner membrane. It catalyses the reaction GTP + H2O = GDP + phosphate + H(+). Required for accurate and efficient protein synthesis under certain stress conditions. May act as a fidelity factor of the translation reaction, by catalyzing a one-codon backward translocation of tRNAs on improperly translocated ribosomes. Back-translocation proceeds from a post-translocation (POST) complex to a pre-translocation (PRE) complex, thus giving elongation factor G a second chance to translocate the tRNAs correctly. Binds to ribosomes in a GTP-dependent manner. In Chlamydia trachomatis serovar D (strain ATCC VR-885 / DSM 19411 / UW-3/Cx), this protein is Elongation factor 4.